The primary structure comprises 900 residues: DNA mismatch repair protein MutS (900 aa).

The interval 1–88 (MPGPSDDPTE…PAWAHHSQVD (88 aa)) is disordered. Over residues 56–68 (APADHNAADHDSN) the composition is skewed to basic and acidic residues. Residue 714 to 721 (GPNASGKS) coordinates ATP.

Belongs to the DNA mismatch repair MutS family.

This protein is involved in the repair of mismatches in DNA. It is possible that it carries out the mismatch recognition step. This protein has a weak ATPase activity. The chain is DNA mismatch repair protein MutS from Parasynechococcus marenigrum (strain WH8102).